Consider the following 342-residue polypeptide: Ketol-acid reductoisomerase (NADP(+)) (342 aa).

Positions 2–181 (VKVYYNGDIK…GGARAGVLET (180 aa)) constitute a KARI N-terminal Rossmann domain. Residues 25 to 28 (YGSQ), Arg48, Ser52, and 82 to 85 (DEQQ) each bind NADP(+). Residue His107 is part of the active site. Gly133 serves as a coordination point for NADP(+). The 146-residue stretch at 182-327 (TFKEETETDL…RKLREMMPFV (146 aa)) folds into the KARI C-terminal knotted domain. Residues Asp190, Glu194, Glu226, and Glu230 each coordinate Mg(2+). Ser251 is a binding site for substrate.

This sequence belongs to the ketol-acid reductoisomerase family. Mg(2+) serves as cofactor.

It carries out the reaction (2R)-2,3-dihydroxy-3-methylbutanoate + NADP(+) = (2S)-2-acetolactate + NADPH + H(+). The catalysed reaction is (2R,3R)-2,3-dihydroxy-3-methylpentanoate + NADP(+) = (S)-2-ethyl-2-hydroxy-3-oxobutanoate + NADPH + H(+). The protein operates within amino-acid biosynthesis; L-isoleucine biosynthesis; L-isoleucine from 2-oxobutanoate: step 2/4. It functions in the pathway amino-acid biosynthesis; L-valine biosynthesis; L-valine from pyruvate: step 2/4. Functionally, involved in the biosynthesis of branched-chain amino acids (BCAA). Catalyzes an alkyl-migration followed by a ketol-acid reduction of (S)-2-acetolactate (S2AL) to yield (R)-2,3-dihydroxy-isovalerate. In the isomerase reaction, S2AL is rearranged via a Mg-dependent methyl migration to produce 3-hydroxy-3-methyl-2-ketobutyrate (HMKB). In the reductase reaction, this 2-ketoacid undergoes a metal-dependent reduction by NADPH to yield (R)-2,3-dihydroxy-isovalerate. The protein is Ketol-acid reductoisomerase (NADP(+)) of Bacillus licheniformis (strain ATCC 14580 / DSM 13 / JCM 2505 / CCUG 7422 / NBRC 12200 / NCIMB 9375 / NCTC 10341 / NRRL NRS-1264 / Gibson 46).